The chain runs to 405 residues: Double C2-like domain-containing protein alpha (405 aa).

The interval 1-94 is interaction with UNC13D and DYNLT1; sequence MRGRRGDRMT…DSYDSDDTTA (94 aa). Residues 34 to 54 form a disordered region; that stretch reads DYFPRRGPGPEGGGGGGGTGC. The segment covering 42–54 has biased composition (gly residues); it reads GPEGGGGGGGTGC. C2 domains follow at residues 94 to 216 and 256 to 389; these read ALGT…HFNI and ERGR…ERWH. 9 residues coordinate Ca(2+): aspartate 125, aspartate 131, aspartate 186, aspartate 188, aspartate 287, aspartate 293, aspartate 347, aspartate 349, and aspartate 355. The interaction with UNC13D stretch occupies residues 220 to 405; that stretch reads RQVPLPSPSS…PPAAGAYPLA (186 aa).

As to quaternary structure, interacts (via N-terminus) with UNC13A. Interacts with cytoplasmic dynein light chain DYNLT1. Interacts with UNC13D. Ca(2+) is required as a cofactor. Brain and mast cells.

The protein resides in the cytoplasmic vesicle. The protein localises to the secretory vesicle. Its subcellular location is the synaptic vesicle membrane. It is found in the synapse. It localises to the synaptosome. The protein resides in the lysosome. In terms of biological role, calcium sensor which most probably regulates fusion of vesicles with membranes. Binds calcium and phospholipids. May be involved in calcium dependent neurotransmitter release through the interaction with UNC13A. May be involved in calcium-dependent spontaneous release of neurotransmitter in absence of action potentials in neuronal cells. Regulates Ca(2+)-dependent secretory lysosome exocytosis in mast cells. The sequence is that of Double C2-like domain-containing protein alpha (Doc2a) from Mus musculus (Mouse).